Here is a 185-residue protein sequence, read N- to C-terminus: MHHPARELPFPDALRPGARPAPHPLLAPVTGYLGTWRGTGSGGYPTLDADFSYAQEVTFSHDGRPFLAYEARAWLLDADGQPLRPSARETGWWRLQPDGRVEALITQPTGIAEISVGHARDGAVDLATERVALAPTAKEVDATRRRYTLTDPDTLTFVHDLAAVGRPLQHHLSARLRREAPGQGI.

A disordered region spans residues 1 to 21 (MHHPARELPFPDALRPGARPA). The short motif at 34-40 (GTWRGTG) is the GXWXGXG element. His-171 provides a ligand contact to heme b.

The protein belongs to the nitrobindin family. Homodimer. Requires heme b as cofactor.

The catalysed reaction is peroxynitrite = nitrate. The protein operates within nitrogen metabolism. Functionally, heme-binding protein able to scavenge peroxynitrite and to protect free L-tyrosine against peroxynitrite-mediated nitration, by acting as a peroxynitrite isomerase that converts peroxynitrite to nitrate. Therefore, this protein likely plays a role in peroxynitrite sensing and in the detoxification of reactive nitrogen and oxygen species (RNS and ROS, respectively). Is able to bind nitric oxide (NO) in vitro, but may act as a sensor of peroxynitrite levels in vivo. This Streptomyces griseus subsp. griseus (strain JCM 4626 / CBS 651.72 / NBRC 13350 / KCC S-0626 / ISP 5235) protein is Peroxynitrite isomerase.